The chain runs to 232 residues: 2,3,4,5-tetrahydropyridine-2,6-dicarboxylate N-acetyltransferase (232 aa).

This sequence belongs to the transferase hexapeptide repeat family. DapH subfamily.

It catalyses the reaction (S)-2,3,4,5-tetrahydrodipicolinate + acetyl-CoA + H2O = L-2-acetamido-6-oxoheptanedioate + CoA. It functions in the pathway amino-acid biosynthesis; L-lysine biosynthesis via DAP pathway; LL-2,6-diaminopimelate from (S)-tetrahydrodipicolinate (acetylase route): step 1/3. Its function is as follows. Catalyzes the transfer of an acetyl group from acetyl-CoA to tetrahydrodipicolinate. The polypeptide is 2,3,4,5-tetrahydropyridine-2,6-dicarboxylate N-acetyltransferase (Streptococcus gordonii (strain Challis / ATCC 35105 / BCRC 15272 / CH1 / DL1 / V288)).